A 397-amino-acid chain; its full sequence is Acetate kinase 2 (397 aa).

Asn10 lines the Mg(2+) pocket. ATP is bound at residue Lys17. Position 90 (Arg90) interacts with substrate. Catalysis depends on Asp147, which acts as the Proton donor/acceptor. ATP is bound by residues 207-211, 281-283, and 329-333; these read HLGNG, DAR, and GIGEN. Glu385 contributes to the Mg(2+) binding site.

It belongs to the acetokinase family. As to quaternary structure, homodimer. It depends on Mg(2+) as a cofactor. Requires Mn(2+) as cofactor.

The protein localises to the cytoplasm. The enzyme catalyses acetate + ATP = acetyl phosphate + ADP. It participates in metabolic intermediate biosynthesis; acetyl-CoA biosynthesis; acetyl-CoA from acetate: step 1/2. Functionally, catalyzes the formation of acetyl phosphate from acetate and ATP. Can also catalyze the reverse reaction. The chain is Acetate kinase 2 from Vibrio cholerae serotype O1 (strain ATCC 39315 / El Tor Inaba N16961).